A 325-amino-acid chain; its full sequence is MNSSSHLTLLDLTLNASEDNILGQNVNNKSSACEDMGIAVEVFLTLGLVSLLENILVIGAIVKNKNLHSPMYFFVGSLAVADMLVSMSNAWETITIYLINNKHVVIADTFVRHIDNVFDSMICISVVASMCSLLAIAVDRYITIFYALRYHHIMTARRSGVIIACIWTFCISCGIVFIIYYESKYVIVCLISMFFTMLFFMVSLYIHMFLLARNHVKRIAASPRYNSVRQRASMKGAITLTMLLGIFIVCWSPFFLHLILMISCPQNVYCACFMSYFNMYLILIMCNSVIDPLIYALRSQEMRRTFKEIICCHGFRRTCTLLGRY.

The Extracellular segment spans residues 1-37 (MNSSSHLTLLDLTLNASEDNILGQNVNNKSSACEDMG). Asn2, Asn15, and Asn28 each carry an N-linked (GlcNAc...) asparagine glycan. Residues 38-61 (IAVEVFLTLGLVSLLENILVIGAI) traverse the membrane as a helical segment. Residues 62-73 (VKNKNLHSPMYF) are Cytoplasmic-facing. Residues 74-97 (FVGSLAVADMLVSMSNAWETITIY) form a helical membrane-spanning segment. Residues 98–114 (LINNKHVVIADTFVRHI) are Extracellular-facing. The chain crosses the membrane as a helical span at residues 115-138 (DNVFDSMICISVVASMCSLLAIAV). Residues 139 to 155 (DRYITIFYALRYHHIMT) are Cytoplasmic-facing. The chain crosses the membrane as a helical span at residues 156–179 (ARRSGVIIACIWTFCISCGIVFII). Residues 180 to 186 (YYESKYV) lie on the Extracellular side of the membrane. A helical transmembrane segment spans residues 187-211 (IVCLISMFFTMLFFMVSLYIHMFLL). At 212–239 (ARNHVKRIAASPRYNSVRQRASMKGAIT) the chain is on the cytoplasmic side. The helical transmembrane segment at 240–265 (LTMLLGIFIVCWSPFFLHLILMISCP) threads the bilayer. Residues 266 to 273 (QNVYCACF) are Extracellular-facing. A helical membrane pass occupies residues 274–297 (MSYFNMYLILIMCNSVIDPLIYAL). Topologically, residues 298–325 (RSQEMRRTFKEIICCHGFRRTCTLLGRY) are cytoplasmic. Residues Cys311 and Cys312 are each lipidated (S-palmitoyl cysteine).

Belongs to the G-protein coupled receptor 1 family. In terms of tissue distribution, very low expression levels is detected in brain, while high levels are found in adrenals, stomach, lung and spleen.

The protein localises to the cell membrane. Its function is as follows. Receptor for MSH (alpha, beta and gamma) and ACTH. The activity of this receptor is mediated by G proteins which activate adenylate cyclase. This receptor is a possible mediator of the immunomodulation properties of melanocortins. The protein is Melanocortin receptor 5 (Mc5r) of Rattus norvegicus (Rat).